The sequence spans 204 residues: dITP/XTP pyrophosphatase (204 aa).

Position 8–13 (8–13 (SNNAHK)) interacts with substrate. Positions 41 and 76 each coordinate Mg(2+). D76 acts as the Proton acceptor in catalysis. Substrate-binding positions include S77, 159–162 (FGYD), K182, and 187–188 (HR).

This sequence belongs to the HAM1 NTPase family. As to quaternary structure, homodimer. Mg(2+) serves as cofactor.

The enzyme catalyses XTP + H2O = XMP + diphosphate + H(+). It catalyses the reaction dITP + H2O = dIMP + diphosphate + H(+). It carries out the reaction ITP + H2O = IMP + diphosphate + H(+). Functionally, pyrophosphatase that catalyzes the hydrolysis of nucleoside triphosphates to their monophosphate derivatives, with a high preference for the non-canonical purine nucleotides XTP (xanthosine triphosphate), dITP (deoxyinosine triphosphate) and ITP. Seems to function as a house-cleaning enzyme that removes non-canonical purine nucleotides from the nucleotide pool, thus preventing their incorporation into DNA/RNA and avoiding chromosomal lesions. This is dITP/XTP pyrophosphatase from Clostridium perfringens (strain 13 / Type A).